The following is an 853-amino-acid chain: uncharacterized protein (853 aa).

Coiled coils occupy residues 313 to 343 (RTDE…LKVA) and 480 to 528 (EGQV…SELI).

This is an uncharacterized protein from Ostreid herpesvirus 1 (isolate France) (OsHV-1).